A 199-amino-acid polypeptide reads, in one-letter code: Peroxiredoxin-1 (199 aa).

The Thioredoxin domain maps to 6 to 165 (AFIGKPAPDF…TLRLVQAFQF (160 aa)). Cys52 serves as the catalytic Cysteine sulfenic acid (-SOH) intermediate.

Belongs to the peroxiredoxin family. AhpC/Prx1 subfamily. In terms of assembly, homodimer; disulfide-linked, upon oxidation. 5 homodimers assemble to form a ring-like decamer. Interacts with GDPD5; forms a mixed-disulfide with GDPD5. Interacts with SESN1 and SESN2. Post-translationally, the enzyme can be inactivated by further oxidation of the cysteine sulfenic acid (C(P)-SOH) to sulphinic acid (C(P)-SO2H) instead of its condensation to a disulfide bond. It can be reactivated by forming a transient disulfide bond with sulfiredoxin SRXN1, which reduces the cysteine sulfinic acid in an ATP- and Mg-dependent manner.

The protein resides in the cytoplasm. It carries out the reaction a hydroperoxide + [thioredoxin]-dithiol = an alcohol + [thioredoxin]-disulfide + H2O. In terms of biological role, thiol-specific peroxidase that catalyzes the reduction of hydrogen peroxide and organic hydroperoxides to water and alcohols, respectively. Plays a role in cell protection against oxidative stress by detoxifying peroxides and as sensor of hydrogen peroxide-mediated signaling events. Might participate in the signaling cascades of growth factors and tumor necrosis factor-alpha by regulating the intracellular concentrations of H(2)O(2). Reduces an intramolecular disulfide bond in GDPD5 that gates the ability to GDPD5 to drive postmitotic motor neuron differentiation. This Gallus gallus (Chicken) protein is Peroxiredoxin-1 (PRDX1).